We begin with the raw amino-acid sequence, 426 residues long: Enolase 2 (426 aa).

Q163 serves as a coordination point for (2R)-2-phosphoglycerate. E205 functions as the Proton donor in the catalytic mechanism. 3 residues coordinate Mg(2+): D242, E285, and D312. 4 residues coordinate (2R)-2-phosphoglycerate: K337, R366, S367, and K388. K337 acts as the Proton acceptor in catalysis.

Belongs to the enolase family. The cofactor is Mg(2+).

The protein localises to the cytoplasm. It localises to the secreted. The protein resides in the cell surface. The enzyme catalyses (2R)-2-phosphoglycerate = phosphoenolpyruvate + H2O. It participates in carbohydrate degradation; glycolysis; pyruvate from D-glyceraldehyde 3-phosphate: step 4/5. Its function is as follows. Catalyzes the reversible conversion of 2-phosphoglycerate (2-PG) into phosphoenolpyruvate (PEP). It is essential for the degradation of carbohydrates via glycolysis. The chain is Enolase 2 from Methanospirillum hungatei JF-1 (strain ATCC 27890 / DSM 864 / NBRC 100397 / JF-1).